A 132-amino-acid polypeptide reads, in one-letter code: Small ribosomal subunit protein uS8 (132 aa).

Belongs to the universal ribosomal protein uS8 family. Part of the 30S ribosomal subunit. Contacts proteins S5 and S12.

One of the primary rRNA binding proteins, it binds directly to 16S rRNA central domain where it helps coordinate assembly of the platform of the 30S subunit. In Parvibaculum lavamentivorans (strain DS-1 / DSM 13023 / NCIMB 13966), this protein is Small ribosomal subunit protein uS8.